Reading from the N-terminus, the 27-residue chain is uncharacterized protein (27 aa).

Its subcellular location is the plastid. The protein localises to the chloroplast. This is an uncharacterized protein from Anthoceros angustus (Hornwort).